The following is a 634-amino-acid chain: Growth hormone receptor (634 aa).

The N-terminal stretch at 1-18 is a signal peptide; the sequence is MDLWQLLLTLAVAGSSDA. Over 19–260 the chain is Extracellular; the sequence is FSGSEATPAF…NPSACEEDFQ (242 aa). Residue Asn46 is glycosylated (N-linked (GlcNAc...) asparagine). Cysteines 56 and 66 form a disulfide. Asn73 is a glycosylation site (N-linked (GlcNAc...) asparagine). Cys97 and Cys108 are oxidised to a cystine. A glycan (N-linked (GlcNAc...) asparagine) is linked at Asn111. Cys122 and Cys136 are oxidised to a cystine. Residues 147–250 form the Fibronectin type-III domain; the sequence is PPVGLNWTLL…EVLLITFPQM (104 aa). N-linked (GlcNAc...) asparagine glycosylation is found at Asn152, Asn157, and Asn196. A WSXWS motif motif is present at residues 236-240; sequence YGKFS. A helical membrane pass occupies residues 261 to 284; that stretch reads FPWFLIIIFGILGLAVTLYLLIFS. Residues 285 to 634 are Cytoplasmic-facing; sequence KQQRIKMLIL…STDQLNKIMP (350 aa). The tract at residues 290 to 375 is required for JAK2 binding; the sequence is KMLILPPVPV…HEKSLNIFGA (86 aa). Positions 293–301 match the Box 1 motif motif; that stretch reads ILPPVPVPK. Residues 336–345 carry the UbE motif motif; it reads DSWVEFIELD. A Phosphoserine modification is found at Ser337.

This sequence belongs to the type I cytokine receptor family. Type 1 subfamily. In terms of assembly, on growth hormone (GH) binding, forms homodimers and binds JAK2 via a box 1-containing domain. The soluble form (GHBP) is produced by phorbol ester-promoted proteolytic cleavage at the cell surface (shedding) by ADAM17/TACE. Shedding is inhibited by growth hormone (GH) binding to the receptor probably due to a conformational change in GHR rendering the receptor inaccessible to ADAM17. In terms of processing, on GH binding, phosphorylated on tyrosine residues in the cytoplasmic domain by JAK2. Post-translationally, ubiquitinated by the ECS(SOCS2) complex following ligand-binding and phosphorylation by JAK2, leading to its degradation by the proteasome. Regulation by the ECS(SOCS2) complex acts as a negative feedback loop of growth hormone receptor signaling. Ubiquitination is not sufficient for GHR internalization.

The protein localises to the cell membrane. The protein resides in the secreted. In terms of biological role, receptor for pituitary gland growth hormone (GH1) involved in regulating postnatal body growth. On ligand binding, couples to the JAK2/STAT5 pathway. Functionally, the soluble form (GHBP) acts as a reservoir of growth hormone in plasma and may be a modulator/inhibitor of GH signaling. This is Growth hormone receptor (GHR) from Bos taurus (Bovine).